The chain runs to 284 residues: Bifunctional protein FolD (284 aa).

NADP(+) contacts are provided by residues 165–167, serine 190, and valine 231; that span reads GRS.

The protein belongs to the tetrahydrofolate dehydrogenase/cyclohydrolase family. Homodimer.

The catalysed reaction is (6R)-5,10-methylene-5,6,7,8-tetrahydrofolate + NADP(+) = (6R)-5,10-methenyltetrahydrofolate + NADPH. It catalyses the reaction (6R)-5,10-methenyltetrahydrofolate + H2O = (6R)-10-formyltetrahydrofolate + H(+). Its pathway is one-carbon metabolism; tetrahydrofolate interconversion. In terms of biological role, catalyzes the oxidation of 5,10-methylenetetrahydrofolate to 5,10-methenyltetrahydrofolate and then the hydrolysis of 5,10-methenyltetrahydrofolate to 10-formyltetrahydrofolate. This is Bifunctional protein FolD from Geobacillus thermodenitrificans (strain NG80-2).